The chain runs to 342 residues: Phosphatidate cytidylyltransferase, mitochondrial (342 aa).

The protein belongs to the TAM41 family. The cofactor is Mg(2+). Co(2+) serves as cofactor. Requires Cu(2+) as cofactor.

The protein resides in the mitochondrion inner membrane. It catalyses the reaction a 1,2-diacyl-sn-glycero-3-phosphate + CTP + H(+) = a CDP-1,2-diacyl-sn-glycerol + diphosphate. It participates in phospholipid metabolism; CDP-diacylglycerol biosynthesis; CDP-diacylglycerol from sn-glycerol 3-phosphate: step 3/3. Catalyzes the formation of CDP-diacylglycerol (CDP-DAG) from phosphatidic acid (PA) in the mitochondrial inner membrane. Required for the biosynthesis of the dimeric phospholipid cardiolipin, which stabilizes supercomplexes of the mitochondrial respiratory chain in the mitochondrial inner membrane. The sequence is that of Phosphatidate cytidylyltransferase, mitochondrial from Drosophila melanogaster (Fruit fly).